Consider the following 284-residue polypeptide: Protein-S-isoprenylcysteine O-methyltransferase (284 aa).

Residues 1 to 16 are Cytoplasmic-facing; sequence MAGCAARAPPGSEARL. The helical transmembrane segment at 17 to 33 threads the bilayer; that stretch reads SLATFLLGASVLALPLL. The Lumenal portion of the chain corresponds to 34-41; that stretch reads TRAGLQGR. Residues 42–59 form a helical membrane-spanning segment; the sequence is TGLALYVAGLNALLLLLY. Residues 60-69 are Cytoplasmic-facing; that stretch reads RPPRYQIAIR. The helical transmembrane segment at 70-87 threads the bilayer; that stretch reads ACFLGFVFGCGTLLSFSQ. Topologically, residues 88–92 are lumenal; it reads SSWSH. The helical transmembrane segment at 93-112 threads the bilayer; the sequence is FGWYMCSLSLFHYSEYLVTA. Residues 113-131 lie on the Cytoplasmic side of the membrane; the sequence is VNNPKSLSLDSFLLNHSLE. The chain crosses the membrane as a helical span at residues 132–149; sequence YTVAALSSWLEFTLENIF. Residues 150–154 are Lumenal-facing; the sequence is WPELK. A helical membrane pass occupies residues 155–174; it reads QITWLSVTGLLMVVFGECLR. At 175 to 212 the chain is on the cytoplasmic side; sequence KAAMFTAGSNFNHVVQNEKSDTHTLVTSGVYAWFRHPS. S-adenosyl-L-methionine is bound by residues glutamine 190, 197–200, tyrosine 205, and 210–213; these read HTLV and HPSY. Residues 213-228 form a helical membrane-spanning segment; it reads YVGWFYWSIGTQVMLC. Position 229 (asparagine 229) is a topological domain, lumenal. The helical transmembrane segment at 230–244 threads the bilayer; that stretch reads PICGVSYALTVWRFF. Topologically, residues 245-284 are cytoplasmic; that stretch reads RDRTEEEEISLIHFFGEEYLEYKKRVPTGLPFIKGVKVDL. Arginine 247 provides a ligand contact to substrate. Glutamate 251 is an S-adenosyl-L-methionine binding site.

Belongs to the class VI-like SAM-binding methyltransferase superfamily. Isoprenylcysteine carboxyl methyltransferase family. As to expression, ubiquitously expressed. Expressed at higher levels in the cerebellum and putamen than in other brain regions. Abundant expression seen in the Purkinje cells and pontine neurons.

The protein localises to the endoplasmic reticulum membrane. It catalyses the reaction [protein]-C-terminal S-[(2E,6E)-farnesyl]-L-cysteine + S-adenosyl-L-methionine = [protein]-C-terminal S-[(2E,6E)-farnesyl]-L-cysteine methyl ester + S-adenosyl-L-homocysteine. With respect to regulation, competitively inhibited by N-acetyl-S-trans,trans-farnesyl-l-cysteine (AFC). Its function is as follows. Catalyzes the post-translational methylation of isoprenylated C-terminal cysteine residues. This is Protein-S-isoprenylcysteine O-methyltransferase (ICMT) from Homo sapiens (Human).